Here is a 158-residue protein sequence, read N- to C-terminus: SsrA-binding protein (158 aa).

The disordered stretch occupies residues 131 to 158 (KQLHDKRQTEKERDWNKQKQRILQTNQR). The segment covering 132–147 (QLHDKRQTEKERDWNK) has biased composition (basic and acidic residues).

It belongs to the SmpB family.

It localises to the cytoplasm. Functionally, required for rescue of stalled ribosomes mediated by trans-translation. Binds to transfer-messenger RNA (tmRNA), required for stable association of tmRNA with ribosomes. tmRNA and SmpB together mimic tRNA shape, replacing the anticodon stem-loop with SmpB. tmRNA is encoded by the ssrA gene; the 2 termini fold to resemble tRNA(Ala) and it encodes a 'tag peptide', a short internal open reading frame. During trans-translation Ala-aminoacylated tmRNA acts like a tRNA, entering the A-site of stalled ribosomes, displacing the stalled mRNA. The ribosome then switches to translate the ORF on the tmRNA; the nascent peptide is terminated with the 'tag peptide' encoded by the tmRNA and targeted for degradation. The ribosome is freed to recommence translation, which seems to be the essential function of trans-translation. The protein is SsrA-binding protein of Teredinibacter turnerae (strain ATCC 39867 / T7901).